A 139-amino-acid polypeptide reads, in one-letter code: Putative pre-16S rRNA nuclease (139 aa).

This sequence belongs to the YqgF nuclease family.

It localises to the cytoplasm. Functionally, could be a nuclease involved in processing of the 5'-end of pre-16S rRNA. The chain is Putative pre-16S rRNA nuclease from Streptococcus pyogenes serotype M2 (strain MGAS10270).